We begin with the raw amino-acid sequence, 698 residues long: DNA ligase (698 aa).

Residues 40–44 (DGEYD), 89–90 (SL), and E123 each bind NAD(+). The N6-AMP-lysine intermediate role is filled by K125. NAD(+)-binding residues include R146, E184, K300, and K324. C418, C421, C436, and C442 together coordinate Zn(2+). The BRCT domain maps to 620-698 (AGDSPLAGKT…EAEFRAMSGG (79 aa)).

The protein belongs to the NAD-dependent DNA ligase family. LigA subfamily. Mg(2+) is required as a cofactor. Requires Mn(2+) as cofactor.

The catalysed reaction is NAD(+) + (deoxyribonucleotide)n-3'-hydroxyl + 5'-phospho-(deoxyribonucleotide)m = (deoxyribonucleotide)n+m + AMP + beta-nicotinamide D-nucleotide.. Its function is as follows. DNA ligase that catalyzes the formation of phosphodiester linkages between 5'-phosphoryl and 3'-hydroxyl groups in double-stranded DNA using NAD as a coenzyme and as the energy source for the reaction. It is essential for DNA replication and repair of damaged DNA. This chain is DNA ligase, found in Rhodospirillum rubrum (strain ATCC 11170 / ATH 1.1.1 / DSM 467 / LMG 4362 / NCIMB 8255 / S1).